The sequence spans 250 residues: ANLLILQVSYAQKSSELVIGGDECNINEHRFLAFTYSRGFFCGGTLINQEWVLTATHCDRIFMRIYLGLHNQSVRYDDQQIRYPKEKYFFPCSKNFTKWDKDIMLIRLDRPVKNSEHIAPLSLPSNPPSVGSVCRVMGWGTITAPNDTYPDVPHCANINLFNYTVCRGAYKGLPATSRTLCAGVLQGGIDTCVGDSGGPLICNGQFQGIVFWGGDPCAQPRKPALYTKVFDHLHWILSIIAGNTTATCPP.

The N-terminal stretch at 1-11 (ANLLILQVSYA) is a signal peptide. A propeptide spanning residues 12-17 (QKSSEL) is cleaved from the precursor. The 224-residue stretch at 18 to 241 (VIGGDECNIN…HLHWILSIIA (224 aa)) folds into the Peptidase S1 domain. 5 disulfide bridges follow: Cys-24–Cys-155, Cys-42–Cys-58, Cys-134–Cys-202, Cys-166–Cys-181, and Cys-192–Cys-217. His-57 functions as the Charge relay system in the catalytic mechanism. Residues Asn-71 and Asn-95 are each glycosylated (N-linked (GlcNAc...) asparagine). Asp-102 (charge relay system) is an active-site residue. N-linked (GlcNAc...) asparagine glycans are attached at residues Asn-146 and Asn-162. The Charge relay system role is filled by Ser-196. N-linked (GlcNAc...) asparagine glycosylation is present at Asn-243.

This sequence belongs to the peptidase S1 family. Snake venom subfamily. Monomer. Expressed by the venom gland.

It localises to the secreted. In terms of biological role, snake venom serine protease that may impair the hemostatic system of the prey. The polypeptide is Snake venom serine protease pictobin (Bothrops pictus (Desert lancehead)).